Consider the following 160-residue polypeptide: uncharacterized protein (160 aa).

The chain crosses the membrane as a helical span at residues 27-47 (VMNSYFIAGCGPAVCYYAVSW).

It is found in the membrane. This is an uncharacterized protein from Homo sapiens (Human).